A 462-amino-acid chain; its full sequence is NAD-capped RNA hydrolase NUDT12 (462 aa).

3 ANK repeats span residues 11-40 (EIVT…SLLN), 45-74 (NGWT…DRSI), and 78-98 (SRQT…ANLL). The residue at position 185 (K185) is an N6-succinyllysine. Positions 284 and 287 each coordinate Zn(2+). K292 carries the N6-succinyllysine modification. Residues C302 and C307 each contribute to the Zn(2+) site. Residues Y318, 354-356 (AGF), E370, E374, and E415 contribute to the substrate site. A Nudix hydrolase domain is found at 319–453 (PRVDPVVIMQ…SRAIAHQLIK (135 aa)). A354, E370, E374, and E415 together coordinate Mg(2+). The short motif at 355–376 (GFIEPGETIEDAVRREVEEESG) is the Nudix box element. A Microbody targeting signal motif is present at residues 460 to 462 (PNL).

The protein belongs to the Nudix hydrolase family. NudC subfamily. Homodimer. Homodimerization is essential for its catalytic activity and protein stability. Interacts (via ANK repeats) with BLMH. The cofactor is Mg(2+). Zn(2+) serves as cofactor.

The protein localises to the cytoplasm. It localises to the peroxisome. It is found in the cytoplasmic granule. It carries out the reaction a 5'-end NAD(+)-phospho-ribonucleoside in mRNA + H2O = a 5'-end phospho-adenosine-phospho-ribonucleoside in mRNA + beta-nicotinamide D-ribonucleotide + 2 H(+). The enzyme catalyses NAD(+) + H2O = beta-nicotinamide D-ribonucleotide + AMP + 2 H(+). The catalysed reaction is NADH + H2O = reduced beta-nicotinamide D-ribonucleotide + AMP + 2 H(+). It catalyses the reaction NADPH + H2O = reduced beta-nicotinamide D-ribonucleotide + adenosine 2',5'-bisphosphate + 2 H(+). MRNA decapping enzyme that specifically removes the nicotinamide adenine dinucleotide (NAD) cap from a subset of mRNAs by hydrolyzing the diphosphate linkage to produce nicotinamide mononucleotide (NMN) and 5' monophosphate mRNA. The NAD-cap is present at the 5'-end of some RNAs; in contrast to the canonical N7 methylguanosine (m7G) cap, the NAD cap promotes mRNA decay. Preferentially acts on NAD-capped transcripts in response to nutrient stress. Also acts on free nicotinamide adenine dinucleotide molecules: hydrolyzes NAD(H) into NMN(H) and AMP, and NADPH into NMNH and 2',5'-ADP. May act to regulate the concentration of peroxisomal nicotinamide nucleotide cofactors required for oxidative metabolism in this organelle. Regulates the levels of circadian clock components PER1, PER2, PER3 and CRY2 in the liver. The polypeptide is NAD-capped RNA hydrolase NUDT12 (Macaca fascicularis (Crab-eating macaque)).